A 124-amino-acid chain; its full sequence is MANKSAEHSHFPWKHIVGFILSIVLTLLALWVAVYTDLSSSAKLWIIFGFAFIQAALQLLMFMHMTESENGTIQVGNTLFGFFGAIVIVLGSIWIFAAHYHHGDHMDGNPPGGAEHSEHSGHNE.

The next 3 helical transmembrane spans lie at 16–36 (IVGFILSIVLTLLALWVAVYT), 44–64 (LWIIFGFAFIQAALQLLMFMH), and 78–98 (TLFGFFGAIVIVLGSIWIFAA).

It belongs to the cytochrome c oxidase bacterial subunit 4 family.

The protein resides in the cell membrane. It carries out the reaction 2 a quinol + O2 = 2 a quinone + 2 H2O. Its function is as follows. Catalyzes quinol oxidation with the concomitant reduction of oxygen to water. Major component for energy conversion during vegetative growth. The polypeptide is Quinol oxidase subunit 4 (qoxD) (Bacillus subtilis (strain 168)).